Consider the following 174-residue polypeptide: Adipose-secreted signaling protein (174 aa).

Ala-2 is modified (N-acetylalanine). Thr-147 bears the Phosphothreonine mark.

The protein belongs to the ADISSP family.

Its subcellular location is the secreted. Functionally, adipocyte-secreted protein (adipokine) that acts as a key regulator for white adipose tissue (WAT) thermogenesis and glucose homeostasis at least in part through activation of protein kinase A (PKA). In Homo sapiens (Human), this protein is Adipose-secreted signaling protein.